The sequence spans 365 residues: tRNA(Met) cytidine acetate ligase (365 aa).

Residues 7–20 (IAEFNPFHNGHKYL), glycine 96, asparagine 152, and arginine 175 each bind ATP.

Belongs to the TmcAL family.

The protein resides in the cytoplasm. It carries out the reaction cytidine(34) in elongator tRNA(Met) + acetate + ATP = N(4)-acetylcytidine(34) in elongator tRNA(Met) + AMP + diphosphate. Functionally, catalyzes the formation of N(4)-acetylcytidine (ac(4)C) at the wobble position of elongator tRNA(Met), using acetate and ATP as substrates. First activates an acetate ion to form acetyladenylate (Ac-AMP) and then transfers the acetyl group to tRNA to form ac(4)C34. In Streptococcus pneumoniae (strain Hungary19A-6), this protein is tRNA(Met) cytidine acetate ligase.